A 311-amino-acid polypeptide reads, in one-letter code: Aspartate carbamoyltransferase catalytic subunit (311 aa).

Positions 55 and 56 each coordinate carbamoyl phosphate. Lysine 85 is an L-aspartate binding site. Positions 106, 135, and 138 each coordinate carbamoyl phosphate. L-aspartate-binding residues include arginine 168 and arginine 230. Carbamoyl phosphate-binding residues include leucine 268 and proline 269.

This sequence belongs to the aspartate/ornithine carbamoyltransferase superfamily. ATCase family. As to quaternary structure, heterododecamer (2C3:3R2) of six catalytic PyrB chains organized as two trimers (C3), and six regulatory PyrI chains organized as three dimers (R2).

It carries out the reaction carbamoyl phosphate + L-aspartate = N-carbamoyl-L-aspartate + phosphate + H(+). The protein operates within pyrimidine metabolism; UMP biosynthesis via de novo pathway; (S)-dihydroorotate from bicarbonate: step 2/3. Functionally, catalyzes the condensation of carbamoyl phosphate and aspartate to form carbamoyl aspartate and inorganic phosphate, the committed step in the de novo pyrimidine nucleotide biosynthesis pathway. The protein is Aspartate carbamoyltransferase catalytic subunit of Yersinia pseudotuberculosis serotype IB (strain PB1/+).